The following is a 154-amino-acid chain: Prefoldin subunit 5 (154 aa).

The residue at position 2 (alanine 2) is an N-acetylalanine. Position 42 is an N6-acetyllysine (lysine 42). A Phosphoserine modification is found at serine 56.

This sequence belongs to the prefoldin subunit alpha family. As to quaternary structure, heterohexamer of two PFD-alpha type and four PFD-beta type subunits. Binds to MYC; interacts with its N-terminal domain. In terms of tissue distribution, highly expressed in pancreas and skeletal muscle and moderately in other tissues.

Its subcellular location is the nucleus. It localises to the cytoplasm. Functionally, binds specifically to cytosolic chaperonin (c-CPN) and transfers target proteins to it. Binds to nascent polypeptide chain and promotes folding in an environment in which there are many competing pathways for nonnative proteins. Represses the transcriptional activity of MYC. This Homo sapiens (Human) protein is Prefoldin subunit 5 (PFDN5).